The following is a 153-amino-acid chain: Regulatory protein RecX (153 aa).

The protein belongs to the RecX family.

The protein localises to the cytoplasm. Functionally, modulates RecA activity. This chain is Regulatory protein RecX, found in Syntrophotalea carbinolica (strain DSM 2380 / NBRC 103641 / GraBd1) (Pelobacter carbinolicus).